The chain runs to 353 residues: MTATLERRESASLWGRFCDWVTSTENRLYIGWFGVLMIPTLLTATAVFIIAFIAAPPVDIDGIREPVSGSLLYGNNIISGAIIPTSAAIGLHFYPIWEAASVDEWLYNGGPYELIVLHFLLGVACYMGREWELSFRLGMRPWIAVAYSAPVAAAAAVFLIYPIGQGSFSDGMPLGISGTFNFMIVFQAEHNILMHPFHMLGVAGVFGGSLFSAMHGSLVTSSLIRETTENESANAGYKFGQEEETYNIVAAHGYFGRLIFQYASFNNSRSLHFFLAAWPVVGIWFTALGISTMAFNLNGFNFNQSVVDSQGRVINTWADIINRANLGMEVMHERNAHNFPLDLASVEAPSVNG.

Position 2 is an N-acetylthreonine (Thr-2). Thr-2 is modified (phosphothreonine). A run of 3 helical transmembrane segments spans residues 29–46, 118–133, and 142–156; these read YIGW…TATA, HFLL…EWEL, and WIAV…AAAA. Residue His-118 participates in chlorophyll a binding. Pheophytin a is bound at residue Tyr-126. Asp-170 and Glu-189 together coordinate [CaMn4O5] cluster. Residues 197-218 form a helical membrane-spanning segment; it reads FHMLGVAGVFGGSLFSAMHGSL. A chlorophyll a-binding site is contributed by His-198. A quinone is bound by residues His-215 and 264 to 265; that span reads SF. His-215 contacts Fe cation. His-272 serves as a coordination point for Fe cation. Residues 274 to 288 form a helical membrane-spanning segment; it reads FLAAWPVVGIWFTAL. Residues His-332, Glu-333, Asp-342, and Ala-344 each coordinate [CaMn4O5] cluster. Residues 345 to 353 constitute a propeptide that is removed on maturation; the sequence is SVEAPSVNG.

It belongs to the reaction center PufL/M/PsbA/D family. PSII is composed of 1 copy each of membrane proteins PsbA, PsbB, PsbC, PsbD, PsbE, PsbF, PsbH, PsbI, PsbJ, PsbK, PsbL, PsbM, PsbT, PsbX, PsbY, PsbZ, Psb30/Ycf12, at least 3 peripheral proteins of the oxygen-evolving complex and a large number of cofactors. It forms dimeric complexes. Requires The D1/D2 heterodimer binds P680, chlorophylls that are the primary electron donor of PSII, and subsequent electron acceptors. It shares a non-heme iron and each subunit binds pheophytin, quinone, additional chlorophylls, carotenoids and lipids. D1 provides most of the ligands for the Mn4-Ca-O5 cluster of the oxygen-evolving complex (OEC). There is also a Cl(-1) ion associated with D1 and D2, which is required for oxygen evolution. The PSII complex binds additional chlorophylls, carotenoids and specific lipids. as cofactor. Tyr-161 forms a radical intermediate that is referred to as redox-active TyrZ, YZ or Y-Z. In terms of processing, C-terminally processed by CTPA; processing is essential to allow assembly of the oxygen-evolving complex and thus photosynthetic growth.

Its subcellular location is the plastid. It is found in the chloroplast thylakoid membrane. The enzyme catalyses 2 a plastoquinone + 4 hnu + 2 H2O = 2 a plastoquinol + O2. In terms of biological role, photosystem II (PSII) is a light-driven water:plastoquinone oxidoreductase that uses light energy to abstract electrons from H(2)O, generating O(2) and a proton gradient subsequently used for ATP formation. It consists of a core antenna complex that captures photons, and an electron transfer chain that converts photonic excitation into a charge separation. The D1/D2 (PsbA/PsbD) reaction center heterodimer binds P680, the primary electron donor of PSII as well as several subsequent electron acceptors. The sequence is that of Photosystem II protein D1 from Huperzia lucidula (Shining clubmoss).